A 305-amino-acid polypeptide reads, in one-letter code: UDP-3-O-acyl-N-acetylglucosamine deacetylase (305 aa).

Zn(2+) is bound by residues His-79, His-238, and Asp-242. His-265 functions as the Proton donor in the catalytic mechanism.

It belongs to the LpxC family. Zn(2+) is required as a cofactor.

It carries out the reaction a UDP-3-O-[(3R)-3-hydroxyacyl]-N-acetyl-alpha-D-glucosamine + H2O = a UDP-3-O-[(3R)-3-hydroxyacyl]-alpha-D-glucosamine + acetate. Its pathway is glycolipid biosynthesis; lipid IV(A) biosynthesis; lipid IV(A) from (3R)-3-hydroxytetradecanoyl-[acyl-carrier-protein] and UDP-N-acetyl-alpha-D-glucosamine: step 2/6. In terms of biological role, catalyzes the hydrolysis of UDP-3-O-myristoyl-N-acetylglucosamine to form UDP-3-O-myristoylglucosamine and acetate, the committed step in lipid A biosynthesis. In Escherichia fergusonii (strain ATCC 35469 / DSM 13698 / CCUG 18766 / IAM 14443 / JCM 21226 / LMG 7866 / NBRC 102419 / NCTC 12128 / CDC 0568-73), this protein is UDP-3-O-acyl-N-acetylglucosamine deacetylase.